The sequence spans 396 residues: Lipid-A-disaccharide synthase (396 aa).

Belongs to the LpxB family.

It carries out the reaction a lipid X + a UDP-2-N,3-O-bis[(3R)-3-hydroxyacyl]-alpha-D-glucosamine = a lipid A disaccharide + UDP + H(+). The protein operates within bacterial outer membrane biogenesis; LPS lipid A biosynthesis. Condensation of UDP-2,3-diacylglucosamine and 2,3-diacylglucosamine-1-phosphate to form lipid A disaccharide, a precursor of lipid A, a phosphorylated glycolipid that anchors the lipopolysaccharide to the outer membrane of the cell. The sequence is that of Lipid-A-disaccharide synthase from Acinetobacter baylyi (strain ATCC 33305 / BD413 / ADP1).